Consider the following 122-residue polypeptide: Large ribosomal subunit protein uL18 (122 aa).

This sequence belongs to the universal ribosomal protein uL18 family. As to quaternary structure, part of the 50S ribosomal subunit; part of the 5S rRNA/L5/L18/L25 subcomplex. Contacts the 5S and 23S rRNAs.

Its function is as follows. This is one of the proteins that bind and probably mediate the attachment of the 5S RNA into the large ribosomal subunit, where it forms part of the central protuberance. The protein is Large ribosomal subunit protein uL18 of Prochlorococcus marinus (strain AS9601).